Reading from the N-terminus, the 319-residue chain is Ribosomal large subunit pseudouridine synthase C (319 aa).

One can recognise an S4 RNA-binding domain in the interval 20 to 83 (QRIDNFLRTQ…AEREEEAVSP (64 aa)). D144 is an active-site residue.

The protein belongs to the pseudouridine synthase RluA family.

It carries out the reaction uridine(955/2504/2580) in 23S rRNA = pseudouridine(955/2504/2580) in 23S rRNA. Its function is as follows. Responsible for synthesis of pseudouridine from uracil at positions 955, 2504 and 2580 in 23S ribosomal RNA. The chain is Ribosomal large subunit pseudouridine synthase C from Escherichia coli (strain K12).